Consider the following 231-residue polypeptide: Axial regulator YABBY 4 (231 aa).

A C4-type zinc finger spans residues 26–53 (CGFCTTILLVSVPFTSLSMVVTVRCGHC). Disordered stretches follow at residues 98–120 (KVNQEKENSPTTLVSSSDNEDED) and 211–231 (NNGFRERKAQRHSIWGKSPFE).

The protein belongs to the YABBY family. As to quaternary structure, interacts with SPL/NZZ.

Its subcellular location is the nucleus. Functionally, essential for the formation and the abaxial-adaxial asymmetric growth of the ovule outer integument. The protein is Axial regulator YABBY 4 (YAB4) of Arabidopsis thaliana (Mouse-ear cress).